The chain runs to 714 residues: DNA ligase (714 aa).

Residues 47–51 (DAEYD), 96–97 (SL), and Glu128 each bind NAD(+). The active-site N6-AMP-lysine intermediate is Lys130. Residues Arg151, Glu188, Lys306, and Lys330 each contribute to the NAD(+) site. Cys435, Cys438, Cys453, and Cys459 together coordinate Zn(2+). The 78-residue stretch at 637 to 714 (RRDTAVAGKT…TEDEWLALIS (78 aa)) folds into the BRCT domain.

This sequence belongs to the NAD-dependent DNA ligase family. LigA subfamily. Mg(2+) serves as cofactor. Mn(2+) is required as a cofactor.

It catalyses the reaction NAD(+) + (deoxyribonucleotide)n-3'-hydroxyl + 5'-phospho-(deoxyribonucleotide)m = (deoxyribonucleotide)n+m + AMP + beta-nicotinamide D-nucleotide.. In terms of biological role, DNA ligase that catalyzes the formation of phosphodiester linkages between 5'-phosphoryl and 3'-hydroxyl groups in double-stranded DNA using NAD as a coenzyme and as the energy source for the reaction. It is essential for DNA replication and repair of damaged DNA. This is DNA ligase from Rhodopseudomonas palustris (strain HaA2).